A 361-amino-acid polypeptide reads, in one-letter code: Phospho-N-acetylmuramoyl-pentapeptide-transferase (361 aa).

10 consecutive transmembrane segments (helical) span residues 21–41, 73–93, 97–117, 134–154, 168–188, 200–220, 237–257, 264–284, 289–309, and 338–358; these read YITLRAVLATLTALTISFLVG, TMGGALILIAIVISTLLWADL, FVWVVLITTLGFGVIGWVDDW, YFWQSLIGAGVAAYLFHTATV, LVLPLGAVSFIVLTYFVIVGT, GLAIMPTVMVASALAVFAYVA, AGELTVFCAAIGGAGLGFLWF, VFMGDVGALALGAALGTVAVI, IVLFIMGGVFVMETISVMLQV, and QVVVRFWIITMMLVLVGLSTL.

This sequence belongs to the glycosyltransferase 4 family. MraY subfamily. Mg(2+) serves as cofactor.

Its subcellular location is the cell inner membrane. The enzyme catalyses UDP-N-acetyl-alpha-D-muramoyl-L-alanyl-gamma-D-glutamyl-meso-2,6-diaminopimeloyl-D-alanyl-D-alanine + di-trans,octa-cis-undecaprenyl phosphate = di-trans,octa-cis-undecaprenyl diphospho-N-acetyl-alpha-D-muramoyl-L-alanyl-D-glutamyl-meso-2,6-diaminopimeloyl-D-alanyl-D-alanine + UMP. It participates in cell wall biogenesis; peptidoglycan biosynthesis. Functionally, catalyzes the initial step of the lipid cycle reactions in the biosynthesis of the cell wall peptidoglycan: transfers peptidoglycan precursor phospho-MurNAc-pentapeptide from UDP-MurNAc-pentapeptide onto the lipid carrier undecaprenyl phosphate, yielding undecaprenyl-pyrophosphoryl-MurNAc-pentapeptide, known as lipid I. The sequence is that of Phospho-N-acetylmuramoyl-pentapeptide-transferase from Methylobacillus flagellatus (strain ATCC 51484 / DSM 6875 / VKM B-1610 / KT).